Consider the following 154-residue polypeptide: Transcriptional repressor NrdR (154 aa).

A zinc finger spans residues 3 to 34 (CPFCGNVDTQVKDSRPAEDNVAIRRRRFCPAC). Residues 49 to 139 (LVVVKSSGRR…VYKNFQAADD (91 aa)) enclose the ATP-cone domain.

The protein belongs to the NrdR family. Requires Zn(2+) as cofactor.

Functionally, negatively regulates transcription of bacterial ribonucleotide reductase nrd genes and operons by binding to NrdR-boxes. In Paracoccus denitrificans (strain Pd 1222), this protein is Transcriptional repressor NrdR.